The primary structure comprises 236 residues: Alpha-acetolactate decarboxylase (236 aa).

The protein belongs to the alpha-acetolactate decarboxylase family.

It carries out the reaction (2S)-2-acetolactate + H(+) = (R)-acetoin + CO2. Its pathway is polyol metabolism; (R,R)-butane-2,3-diol biosynthesis; (R,R)-butane-2,3-diol from pyruvate: step 2/3. In terms of biological role, converts acetolactate into acetoin. This is Alpha-acetolactate decarboxylase (aldB) from Lactococcus lactis subsp. lactis (strain IL1403) (Streptococcus lactis).